We begin with the raw amino-acid sequence, 294 residues long: Cyclin-G1 (294 aa).

It belongs to the cyclin family. Cyclin G subfamily.

It localises to the nucleus. In terms of biological role, may play a role in growth regulation. Is associated with G2/M phase arrest in response to DNA damage. May be an intermediate by which p53 mediates its role as an inhibitor of cellular proliferation. The chain is Cyclin-G1 (Ccng1) from Rattus norvegicus (Rat).